A 211-amino-acid chain; its full sequence is MTPWLGLIVLLGSWSLGDWGAEACTCSPSHPQDAFCNSDIVIRAKVVGKKLVKEGPFGTLVYTIKQMKMYRGFTKMPHVQYIHTEASESLCGLKLEVNKYQYLLTGRVYDGKMYTGLCNFVERWDQLTLSQRKGLNYRYHLGCNCKIKSCYYLPCFVTSKNECLWTDMLSNFGYPGYQSKHYACIRQKGGYCSWYRGWAPPDKSIINATDP.

The N-terminal stretch at Met-1–Ala-23 is a signal peptide. Cys-24 provides a ligand contact to Zn(2+). 2 involved in metalloproteinase-binding regions span residues Cys-24–Ser-27 and Glu-88–Ser-89. Cystine bridges form between Cys-24/Cys-91, Cys-26/Cys-118, Cys-36/Cys-143, Cys-145/Cys-192, Cys-150/Cys-155, and Cys-163/Cys-184. In terms of domain architecture, NTR spans Cys-24–Cys-143. Residues Thr-105–Lys-188 are mediates interaction with EFEMP1. Asn-207 is a glycosylation site (N-linked (GlcNAc...) asparagine).

Belongs to the protease inhibitor I35 (TIMP) family. Interacts with EFEMP1. Interacts with KDR.

It is found in the secreted. Its subcellular location is the extracellular space. It localises to the extracellular matrix. Mediates a variety of processes including matrix regulation and turnover, inflammation, and angiogenesis, through reversible inhibition of zinc protease superfamily enzymes, primarily matrix metalloproteinases (MMPs). Regulates extracellular matrix (ECM) remodeling through inhibition of matrix metalloproteinases (MMP) including MMP-1, MMP-2, MMP-3, MMP-7, MMP-9, MMP-13, MMP-14 and MMP-15. Additionally, modulates the processing of amyloid precursor protein (APP) and apolipoprotein E receptor ApoER2 by inhibiting two alpha-secretases ADAM10 and ADAM17. Functions as a tumor suppressor and a potent inhibitor of angiogenesis. Exerts its anti-angiogenic effect by directly interacting with vascular endothelial growth factor (VEGF) receptor-2/KDR, preventing its binding to the VEGFA ligand. Selectively induces apoptosis in angiogenic endothelial cells through a caspase-independent cell death pathway. Mechanistically, inhibits matrix-induced focal adhesion kinase PTK2 tyrosine phosphorylation and association with paxillin/PXN and disrupts the incorporation of ITGB3, PTK2 and PXN into focal adhesion contacts on the matrix. In Macaca mulatta (Rhesus macaque), this protein is Metalloproteinase inhibitor 3 (TIMP3).